We begin with the raw amino-acid sequence, 101 residues long: Small ubiquitin-related modifier 1 (101 aa).

Ser-2 is subject to N-acetylserine. Position 2 is a phosphoserine (Ser-2). A Glycyl lysine isopeptide (Lys-Gly) (interchain with G-Cter in SUMO1); alternate cross-link involves residue Lys-7. A Glycyl lysine isopeptide (Lys-Gly) (interchain with G-Cter in SUMO2); alternate cross-link involves residue Lys-7. Residue Ser-9 is modified to Phosphoserine. Glycyl lysine isopeptide (Lys-Gly) (interchain with G-Cter in SUMO2) cross-links involve residues Lys-16, Lys-17, and Lys-23. The region spanning 20-97 is the Ubiquitin-like domain; sequence EYIKLKVIGQ…IEVYQEQTGG (78 aa). Lys-25 is covalently cross-linked (Glycyl lysine isopeptide (Lys-Gly) (interchain with G-Cter in SUMO1)). A Phosphoserine modification is found at Ser-32. Residues Lys-37, Lys-39, Lys-45, and Lys-46 each participate in a glycyl lysine isopeptide (Lys-Gly) (interchain with G-Cter in SUMO2) cross-link. Residue Gly-97 forms a Glycyl lysine isopeptide (Gly-Lys) (interchain with K-? in acceptor proteins) linkage. A propeptide spanning residues 98–101 is cleaved from the precursor; it reads HSNV.

It belongs to the ubiquitin family. SUMO subfamily. As to quaternary structure, covalently attached to KCNB1; UBE2I increases cross-linking with KCNB1 and PIAS1 decreases cross-links with KCNB1. Interacts with SAE2, RANBP2, PIAS1 and PIAS2. Interacts with PRKN. Covalently attached to a number of proteins such as IKFZ1, PML, RANGAP1, HIPK2, SP100, p53, p73-alpha, MDM2, JUN, DNMT3B and TDG. Also interacts with HIF1A, HIPK2, HIPK3, CHD3, EXOSC9, RAD51 and RAD52. Interacts with USP25 (via ts SIM domain); the interaction weakly sumoylates USP25. Interacts with SIMC1, CASP8AP2, RNF111 and SOBP (via SIM domains). Interacts with BHLHE40/DEC1. Interacts with RWDD3. Interacts with UBE2I/UBC9 and this interaction is enhanced in the presence of RWDD3. Interacts with MTA1. Interacts with SENP2. Interacts with HINT1. In terms of processing, cleavage of precursor form by SENP1 or SENP2 is necessary for function. Polymeric SUMO1 chains undergo polyubiquitination by RNF4.

The protein resides in the nucleus membrane. It is found in the nucleus speckle. Its subcellular location is the cytoplasm. It localises to the nucleus. The protein localises to the PML body. The protein resides in the cell membrane. Its function is as follows. Ubiquitin-like protein that can be covalently attached to proteins as a monomer or a lysine-linked polymer. Covalent attachment via an isopeptide bond to its substrates requires prior activation by the E1 complex SAE1-SAE2 and linkage to the E2 enzyme UBE2I, and can be promoted by E3 ligases such as PIAS1-4, RANBP2 or CBX4. This post-translational modification on lysine residues of proteins plays a crucial role in a number of cellular processes such as nuclear transport, DNA replication and repair, mitosis and signal transduction. Involved for instance in targeting RANGAP1 to the nuclear pore complex protein RANBP2. Covalently attached to the voltage-gated potassium channel KCNB1; this modulates the gating characteristics of KCNB1. Polymeric SUMO1 chains are also susceptible to polyubiquitination which functions as a signal for proteasomal degradation of modified proteins. May be involved in modified proteins. May also regulate a network of genes involved in palate development. Covalently attached to ZFHX3. This is Small ubiquitin-related modifier 1 (SUMO1) from Ictidomys tridecemlineatus (Thirteen-lined ground squirrel).